We begin with the raw amino-acid sequence, 213 residues long: MAKNYYDITLALAGICQSARLVQQLAHQGHCDADALHVSLNSIIDMNPSSTLAVFGGSEANLRVGLETLLGVLNASSCQGLNAELTRYTLSLMVLERKLSSAKGALDTLGNRINGLQRQLEHFDLQSETLMSAMAAIYVDVISPLGPRIQVTGSPAVLQSPQVQAKVRATLLAGIRAAVLWHQVGGGRLQLMFSRNRLTTQAKQILAHLTPEL.

Residues 79–126 adopt a coiled-coil conformation; the sequence is QGLNAELTRYTLSLMVLERKLSSAKGALDTLGNRINGLQRQLEHFDLQ.

The protein belongs to the HflD family.

The protein resides in the cytoplasm. Its subcellular location is the cell inner membrane. This Shigella flexneri serotype 5b (strain 8401) protein is High frequency lysogenization protein HflD homolog.